The sequence spans 225 residues: NAD(P)H-quinone oxidoreductase subunit K, chloroplastic (225 aa).

Residues Cys43, Cys44, Cys108, and Cys139 each contribute to the [4Fe-4S] cluster site.

The protein belongs to the complex I 20 kDa subunit family. In terms of assembly, NDH is composed of at least 16 different subunits, 5 of which are encoded in the nucleus. The cofactor is [4Fe-4S] cluster.

It is found in the plastid. The protein resides in the chloroplast thylakoid membrane. The enzyme catalyses a plastoquinone + NADH + (n+1) H(+)(in) = a plastoquinol + NAD(+) + n H(+)(out). It carries out the reaction a plastoquinone + NADPH + (n+1) H(+)(in) = a plastoquinol + NADP(+) + n H(+)(out). Its function is as follows. NDH shuttles electrons from NAD(P)H:plastoquinone, via FMN and iron-sulfur (Fe-S) centers, to quinones in the photosynthetic chain and possibly in a chloroplast respiratory chain. The immediate electron acceptor for the enzyme in this species is believed to be plastoquinone. Couples the redox reaction to proton translocation, and thus conserves the redox energy in a proton gradient. The chain is NAD(P)H-quinone oxidoreductase subunit K, chloroplastic from Gossypium barbadense (Sea Island cotton).